The chain runs to 70 residues: MSKVKNLLAKMLQRFGKNSSQADSQRYDSLEEIAQNQANERMLRATQVGLEEHLVICLETEAGSFYWHSQ.

The chain is Enhancer of split m6 protein from Drosophila melanogaster (Fruit fly).